The chain runs to 420 residues: Mannose-1-phosphate guanylyltransferase regulatory subunit alpha (420 aa).

The interval Leu2–Ala251 is substrate-binding domain. Residues Glu85 and Gln247 each coordinate GDP-alpha-D-mannose. The segment at Leu273–Leu420 is hexapeptide repeat domain. The C-loop stretch occupies residues Thr356 to Ile384.

The protein belongs to the transferase hexapeptide repeat family. As to quaternary structure, component of the GMPPA-GMPPB mannose-1-phosphate guanylyltransferase complex composed of 4 GMPPA subunits and 8 GMPPB subunits; the complex is organized into three layers, a central layer made up of 2 GMPPA dimers sandwiched between two layers each made up of 2 GMPPB dimers. In terms of tissue distribution, expressed in the liver (at protein level).

Its subcellular location is the cytoplasm. Its function is as follows. Regulatory subunit of the GMPPA-GMPPB mannose-1-phosphate guanylyltransferase complex; reduces the catalytic activity of GMPPB when part of the complex. Mediates allosteric feedback inhibition of GMPPB catalytic activity upon binding GDP-alpha-D-mannose. Together with GMPPB regulates GDP-alpha-D-mannose levels. The sequence is that of Mannose-1-phosphate guanylyltransferase regulatory subunit alpha (GMPPA) from Sus scrofa (Pig).